The primary structure comprises 344 residues: Mitogen-activated protein kinase mpkC (344 aa).

One can recognise a Protein kinase domain in the interval 19–298 (YANVQPVGLG…AETALQHPYL (280 aa)). ATP-binding positions include 25–33 (VGLGAFGLV) and lysine 48. Catalysis depends on aspartate 140, which acts as the Proton acceptor. At threonine 170 the chain carries Phosphothreonine. A TXY motif is present at residues 170-172 (TGY). Tyrosine 172 bears the Phosphotyrosine mark.

Belongs to the protein kinase superfamily. Ser/Thr protein kinase family. MAP kinase subfamily. HOG1 sub-subfamily. It depends on Mg(2+) as a cofactor. Post-translationally, dually phosphorylated on Thr-170 and Tyr-172, which activates the enzyme.

It catalyses the reaction L-seryl-[protein] + ATP = O-phospho-L-seryl-[protein] + ADP + H(+). The catalysed reaction is L-threonyl-[protein] + ATP = O-phospho-L-threonyl-[protein] + ADP + H(+). Its activity is regulated as follows. Activated by tyrosine and threonine phosphorylation. In terms of biological role, mitogen-activated protein kinase required for growth on media where sorbitol or mannitol is the sole carbon source. This Aspergillus oryzae (strain ATCC 42149 / RIB 40) (Yellow koji mold) protein is Mitogen-activated protein kinase mpkC (mpkC).